The following is a 143-amino-acid chain: Transcriptional regulator MraZ (143 aa).

SpoVT-AbrB domains follow at residues 5–47 and 76–119; these read EYRH…PQSE and ASEC…SKTL.

This sequence belongs to the MraZ family. In terms of assembly, forms oligomers.

It localises to the cytoplasm. The protein localises to the nucleoid. This Shouchella clausii (strain KSM-K16) (Alkalihalobacillus clausii) protein is Transcriptional regulator MraZ.